Consider the following 824-residue polypeptide: MENVHLAPETDEDDLYSGFNDYNPAYDTEELENDTGFQQAVRTSHGRRPPVTAKIPSTAVSRPIATGYGSKTSLTSSMGRPMTGTIQDGVARPMTAVRAAGFSKAALRGSAFDPLGQSRGPAPPLEAKNEDSPEEKIRQLEKKVNELVEESCIANSCGDLKLALEKAKDAGRKERVLVRQREQVTSPENINLDLTYSVLFNLASQYSANEMYAEALNTYQVIVKNKMFSNAGRLKVNMGNIYLKQRNYSKAIKFYRMALDQIPSVHKEMRIKIMQNIGITFIKTGQYSDAINSFEHIMSMAPSLKAGFNLILSCFAIGDREKMKKAFQKLIAVPLEIDEDDKYISPSDDPHTNLLIEAIKNDHLRQMERERKAMAEKYIMTAAKLIAPVIEASFAVGYNWCVEVVKASQYVELANDLEINKAITYLRQKDFNQAVDTLKMFEKKDSRVKSAAATNLSFLYYLENEFAQASSYADLAVNSDRYNPSALTNKGNTVFANGDYEKAAEFYKEALRNDSSCTEALYNIGLTYKKLNRLDEALDSFLKLHAILRNSAQVLCQIANIYELMEDPNQAIEWLMQLISVVPTDSQALSKLGELYDSEGDKSQAFQYYYESYRYFPSNIEVIEWLGAYYIDTQFCEKAIQYFERASLIQPTQVKWQLMVASCFRRSGNYQKALDTYKEIHRKFPENVECLRFLVRLCTDIGLKEVQEYATKLKRLEKMKEMREQRIKSGRDSSGGSRSKREGSAGSDSGQNNSASSKSERLSAKLRALPGTDEPYESSGNKEIDASYVDPLGPQIERPKTAAKKRIDEDDFADEELGDDLLPE.

2 disordered regions span residues 1 to 27 (MENV…PAYD) and 111 to 134 (AFDP…DSPE). 11 TPR repeats span residues 196–229 (YSVL…KMFS), 232–265 (GRLK…IPSV), 271–304 (IKIM…APSL), 415–448 (NDLE…DSRV), 450–483 (SAAA…DRYN), 484–517 (PSAL…DSSC), 518–551 (TEAL…LRNS), 552–585 (AQVL…VPTD), 586–619 (SQAL…FPSN), 620–653 (IEVI…QPTQ), and 654–687 (VKWQ…FPEN). Basic and acidic residues predominate over residues 721–731 (EMREQRIKSGR). The tract at residues 721-824 (EMREQRIKSG…EELGDDLLPE (104 aa)) is disordered. The span at 748 to 757 (DSGQNNSASS) shows a compositional bias: polar residues. Basic and acidic residues predominate over residues 797–808 (ERPKTAAKKRID). Positions 809 to 824 (EDDFADEELGDDLLPE) are enriched in acidic residues.

As to quaternary structure, component of the IFT complex B, at least composed of IFT20, IFT22, IFT25, IFT27, IFT46, IFT52, TRAF3IP1/IFT54, IFT57, IFT74, IFT80, IFT81, and IFT88. Interacts with IFT20, IFT22, IFT25, IFT27, IFT52, TRAF3IP1, IFT74, IFT80 and IFT81. Interacts with IFT172. Interacts with IFT57. Interacts with IFT46. Interacts with IFT70B. Interacts with C2CD3. Interacts with ENTR1 (via N-terminus). Interacts with LRRC56. Interacts with DZIP1. Interacts with CCDC38. Interacts with CCDC146. Interacts with CFAP53. As to expression, testis.

The protein resides in the cytoplasm. The protein localises to the cytoskeleton. It is found in the microtubule organizing center. It localises to the centrosome. Its subcellular location is the centriole. The protein resides in the cilium basal body. The protein localises to the cell projection. It is found in the cilium. It localises to the flagellum. Positively regulates primary cilium biogenesis. Also involved in autophagy since it is required for trafficking of ATG16L and the expansion of the autophagic compartment. The protein is Intraflagellar transport protein 88 homolog (Ift88) of Mus musculus (Mouse).